The chain runs to 191 residues: UPF0312 protein Shew185_3055 (191 aa).

An N-terminal signal peptide occupies residues 1-22 (MKKQLLSALIGASLLAPMAASA).

The protein belongs to the UPF0312 family. Type 1 subfamily.

It is found in the periplasm. This chain is UPF0312 protein Shew185_3055, found in Shewanella baltica (strain OS185).